We begin with the raw amino-acid sequence, 855 residues long: Vomeronasal type-2 receptor 26 (855 aa).

An N-terminal signal peptide occupies residues 1 to 22; it reads MKLLTAFSPLVVLILFQEQISC. The Extracellular portion of the chain corresponds to 23–595; it reads YYLTKYASSG…FLAHEDPLGT (573 aa). Residues asparagine 101 and asparagine 295 are each glycosylated (N-linked (GlcNAc...) asparagine). Residues 596–616 traverse the membrane as a helical segment; that stretch reads VLVSLAISLSAFSAMILGLFI. Topologically, residues 617-630 are cytoplasmic; sequence CYRETPIVRANNRN. The helical transmembrane segment at 631–651 threads the bilayer; it reads LSYLLLISLKLCFSCSLMFIG. Topologically, residues 652-662 are extracellular; sequence QPRTVTCVLRQ. A helical membrane pass occupies residues 663–683; it reads IIFGIVFSIVISAILAKTFIV. Topologically, residues 684 to 706 are cytoplasmic; it reads VMAFKAIKPGSILKMGMVTRLSN. The helical transmembrane segment at 707–727 threads the bilayer; the sequence is AIVCCGSIIQVCICAVWLGTY. The Extracellular segment spans residues 728–753; it reads PPFPDVDMHSEFGQIILWCNEGSTLA. A helical membrane pass occupies residues 754–774; that stretch reads FYCVLGYLGFLASLSLLIAFL. Over 775 to 786 the chain is Cytoplasmic; the sequence is ARRLPDSFNEAK. A helical membrane pass occupies residues 787–807; that stretch reads TITFSMLVFCSVWISFVPAYL. The Extracellular portion of the chain corresponds to 808-814; it reads SSKGKTM. A helical membrane pass occupies residues 815–835; that stretch reads VAVEILSILASSAGLLGCIFL. The Cytoplasmic portion of the chain corresponds to 836–855; sequence PKCYVILLKSGGHSRKKFFK.

The protein belongs to the G-protein coupled receptor 3 family. In terms of tissue distribution, expressed in the basal epithelium of the vomeronasal organ. Located to vomeronasal sensory neurons that project their axons to six to ten glomeruli that reside in globally conserved areas within the caudal accessory olfactory bulb (AOB).

It localises to the cell membrane. Its function is as follows. Putative pheromone receptor. This Mus musculus (Mouse) protein is Vomeronasal type-2 receptor 26 (Vmn2r26).